The following is a 340-amino-acid chain: Phenylalanine--tRNA ligase alpha subunit (340 aa).

Residue Glu254 coordinates Mg(2+).

The protein belongs to the class-II aminoacyl-tRNA synthetase family. Phe-tRNA synthetase alpha subunit type 1 subfamily. Tetramer of two alpha and two beta subunits. It depends on Mg(2+) as a cofactor.

The protein localises to the cytoplasm. The enzyme catalyses tRNA(Phe) + L-phenylalanine + ATP = L-phenylalanyl-tRNA(Phe) + AMP + diphosphate + H(+). This Acidithiobacillus ferrooxidans (strain ATCC 23270 / DSM 14882 / CIP 104768 / NCIMB 8455) (Ferrobacillus ferrooxidans (strain ATCC 23270)) protein is Phenylalanine--tRNA ligase alpha subunit.